Reading from the N-terminus, the 359-residue chain is NADH-quinone oxidoreductase subunit H (359 aa).

A run of 8 helical transmembrane segments spans residues 16-36, 94-114, 128-148, 167-187, 205-225, 261-281, 296-316, and 331-351; these read IWPA…AVLA, GLFI…WAVI, GLLF…IAGW, VSYE…SGSL, GLTF…VYFI, FFLA…LLFL, IPGW…FLWV, and LGWK…GAWM.

Belongs to the complex I subunit 1 family. As to quaternary structure, NDH-1 is composed of 14 different subunits. Subunits NuoA, H, J, K, L, M, N constitute the membrane sector of the complex.

It is found in the cell inner membrane. It catalyses the reaction a quinone + NADH + 5 H(+)(in) = a quinol + NAD(+) + 4 H(+)(out). NDH-1 shuttles electrons from NADH, via FMN and iron-sulfur (Fe-S) centers, to quinones in the respiratory chain. The immediate electron acceptor for the enzyme in this species is believed to be ubiquinone. Couples the redox reaction to proton translocation (for every two electrons transferred, four hydrogen ions are translocated across the cytoplasmic membrane), and thus conserves the redox energy in a proton gradient. This subunit may bind ubiquinone. The chain is NADH-quinone oxidoreductase subunit H from Polaromonas naphthalenivorans (strain CJ2).